We begin with the raw amino-acid sequence, 780 residues long: Kojibiose phosphorylase (780 aa).

354 to 355 (WD) is a substrate binding site. Residue E496 is the Proton donor of the active site. 608–609 (KQ) lines the substrate pocket.

The protein belongs to the glycosyl hydrolase 65 family.

It carries out the reaction kojibiose + phosphate = beta-D-glucose 1-phosphate + D-glucose. Catalyzes the reversible phosphorolysis of kojibiose into beta-D-glucose 1-phosphate (Glc1P) and D-glucose. In the reverse direction, uses Glc1P as acceptor to produce alpha-1,2-glucans up to a degree of polymerization of 6. This Halothermothrix orenii (strain H 168 / OCM 544 / DSM 9562) protein is Kojibiose phosphorylase.